Consider the following 271-residue polypeptide: Structure-specific endonuclease subunit SLX1 (271 aa).

One can recognise a GIY-YIG domain in the interval 9–94; it reads RFFGVYLLYC…PQASRRLTHV (86 aa). An SLX1-type zinc finger spans residues 182–234; that stretch reads CTLCARMLQDEEGPLCCPHPGCPLRAHIICLAEEFLQEEPGQLLPLEGHCPSC.

It belongs to the SLX1 family. In terms of assembly, forms a heterodimer with SLX4. A divalent metal cation is required as a cofactor.

The protein localises to the nucleus. Its function is as follows. Catalytic subunit of the SLX1-SLX4 structure-specific endonuclease that resolves DNA secondary structures generated during DNA repair and recombination. Has endonuclease activity towards branched DNA substrates, introducing single-strand cuts in duplex DNA close to junctions with ss-DNA. Has a preference for 5'-flap structures, and promotes symmetrical cleavage of static and migrating Holliday junctions (HJs). Resolves HJs by generating two pairs of ligatable, nicked duplex products. The sequence is that of Structure-specific endonuclease subunit SLX1 (Slx1b) from Rattus norvegicus (Rat).